A 152-amino-acid polypeptide reads, in one-letter code: Nucleoside diphosphate kinase (152 aa).

6 residues coordinate ATP: Lys11, Phe59, Arg87, Thr93, Arg104, and Asn114. His117 serves as the catalytic Pros-phosphohistidine intermediate.

The protein belongs to the NDK family. As to quaternary structure, homotetramer. Mg(2+) serves as cofactor.

Its subcellular location is the cytoplasm. It catalyses the reaction a 2'-deoxyribonucleoside 5'-diphosphate + ATP = a 2'-deoxyribonucleoside 5'-triphosphate + ADP. The enzyme catalyses a ribonucleoside 5'-diphosphate + ATP = a ribonucleoside 5'-triphosphate + ADP. Functionally, major role in the synthesis of nucleoside triphosphates other than ATP. The ATP gamma phosphate is transferred to the NDP beta phosphate via a ping-pong mechanism, using a phosphorylated active-site intermediate. In Prochlorococcus marinus (strain MIT 9215), this protein is Nucleoside diphosphate kinase.